A 305-amino-acid chain; its full sequence is tRNA dimethylallyltransferase (305 aa).

14–21 (GPTTSGKT) is an ATP binding site. 16 to 21 (TTSGKT) lines the substrate pocket. 3 interaction with substrate tRNA regions span residues 39 to 42 (DSAL), 163 to 167 (QRITR), and 243 to 248 (RCVGYR).

The protein belongs to the IPP transferase family. Monomer. The cofactor is Mg(2+).

The catalysed reaction is adenosine(37) in tRNA + dimethylallyl diphosphate = N(6)-dimethylallyladenosine(37) in tRNA + diphosphate. Catalyzes the transfer of a dimethylallyl group onto the adenine at position 37 in tRNAs that read codons beginning with uridine, leading to the formation of N6-(dimethylallyl)adenosine (i(6)A). This chain is tRNA dimethylallyltransferase, found in Ruthia magnifica subsp. Calyptogena magnifica.